The chain runs to 191 residues: dCTP deaminase (191 aa).

DCTP contacts are provided by residues 112–117, 136–138, Q157, Y173, and Q183; these read KSTYAR and TLE. Catalysis depends on E138, which acts as the Proton donor/acceptor.

It belongs to the dCTP deaminase family. As to quaternary structure, homotrimer.

It catalyses the reaction dCTP + H2O + H(+) = dUTP + NH4(+). Its pathway is pyrimidine metabolism; dUMP biosynthesis; dUMP from dCTP (dUTP route): step 1/2. Catalyzes the deamination of dCTP to dUTP. The protein is dCTP deaminase of Psychrobacter cryohalolentis (strain ATCC BAA-1226 / DSM 17306 / VKM B-2378 / K5).